Consider the following 465-residue polypeptide: Crh-like protein ARB_05253 (465 aa).

Positions 1–21 (MKLSLAAALLGALAVSAQTST) are cleaved as a signal peptide. Residues 22 to 223 (ECNPLKQKCP…WAGGETDFSK (202 aa)) enclose the GH16 domain. A disulfide bridge connects residues Cys23 and Cys30. Glu114 serves as the catalytic Nucleophile. Glu118 (proton donor) is an active-site residue. Residues Glu118, Trp200, and Thr211 each contribute to the chitin site. Disordered regions lie at residues 261-325 (GQVN…STMT) and 339-442 (TGTG…PGST). A glycan (N-linked (GlcNAc...) asparagine) is linked at Asn264. A compositionally biased stretch (low complexity) spans 277–287 (SSTLPSSPSTS). Residues 304 to 325 (QAPNTGSSPSNTLTNGPSSTMT) show a composition bias toward polar residues. Composition is skewed to low complexity over residues 339–348 (TGTGGVVTPT), 361–376 (TSRS…SASS), and 383–397 (MTTS…TGTG). A lipid anchor (GPI-anchor amidated serine) is attached at Ser441. Positions 442–465 (TGAIHSVSNALLLSFCAIAAWALV) are cleaved as a propeptide — removed in mature form.

The protein belongs to the glycosyl hydrolase 16 family. CRH1 subfamily. The GPI-anchor is attached to the protein in the endoplasmic reticulum and serves to target the protein to the cell surface. There, the glucosamine-inositol phospholipid moiety is cleaved off and the GPI-modified mannoprotein is covalently attached via its lipidless GPI glycan remnant to the 1,6-beta-glucan of the outer cell wall layer.

The protein localises to the secreted. It is found in the cell wall. Its subcellular location is the membrane. It catalyses the reaction Random endo-hydrolysis of N-acetyl-beta-D-glucosaminide (1-&gt;4)-beta-linkages in chitin and chitodextrins.. Its function is as follows. Dual chitinase/transglycosylase that plays a role in cell wall architecture. Chitinase and transglycosylase activities are coupled. Required for the polysaccharide cross-linking at the septa and the cell wall. More specifically, transfers chitin to 1,6-beta-glucan in the cell wall. The polypeptide is Crh-like protein ARB_05253 (Arthroderma benhamiae (strain ATCC MYA-4681 / CBS 112371) (Trichophyton mentagrophytes)).